A 125-amino-acid polypeptide reads, in one-letter code: Egg cell-secreted protein 1.2 (125 aa).

The signal sequence occupies residues 1–22; sequence MASNTSFLFATIAILLVLNISG.

Belongs to the plant egg cell-secreted peptide family. Restricted to female reproductive tissues, specifically accumulating in storage vesicles of the unfertilized egg cell.

The protein resides in the cytoplasmic vesicle. It localises to the secreted. In terms of biological role, involved in the regulation of gamete interactions during the double fertilization and to prevent multiple-pollen tube attraction; mediates the redistribution of the gamete fusogen HAP2/GCS1 to the cell surface after secretion upon sperm arrival. The chain is Egg cell-secreted protein 1.2 (EC1.2) from Arabidopsis thaliana (Mouse-ear cress).